An 833-amino-acid chain; its full sequence is DNA ligase (833 aa).

NAD(+) is bound by residues 35–39 (DVEYD), 84–85 (SL), and Glu115. The active-site N6-AMP-lysine intermediate is the Lys117. Positions 138, 175, 292, and 316 each coordinate NAD(+). Positions 410, 413, 428, and 434 each coordinate Zn(2+). One can recognise a BRCT domain in the interval 750–833 (VQAGPLDGQT…AFLSEHGQAV (84 aa)).

The protein belongs to the NAD-dependent DNA ligase family. LigA subfamily. Mg(2+) serves as cofactor. Requires Mn(2+) as cofactor.

It carries out the reaction NAD(+) + (deoxyribonucleotide)n-3'-hydroxyl + 5'-phospho-(deoxyribonucleotide)m = (deoxyribonucleotide)n+m + AMP + beta-nicotinamide D-nucleotide.. Its function is as follows. DNA ligase that catalyzes the formation of phosphodiester linkages between 5'-phosphoryl and 3'-hydroxyl groups in double-stranded DNA using NAD as a coenzyme and as the energy source for the reaction. It is essential for DNA replication and repair of damaged DNA. The polypeptide is DNA ligase (Xanthomonas campestris pv. campestris (strain 8004)).